A 90-amino-acid chain; its full sequence is Mitochondrial import inner membrane translocase subunit Tim10 (90 aa).

Positions 29–54 (CHRKCVPPHYKEAELSKGESVCLDRC) match the Twin CX3C motif motif. 2 cysteine pairs are disulfide-bonded: C29–C54 and C33–C50.

This sequence belongs to the small Tim family. Heterohexamer; composed of 3 copies of TIMM9 and 3 copies of TIMM10/TIM10A, named soluble 70 kDa complex. The complex forms a 6-bladed alpha-propeller structure and associates with the TIMM22 component of the TIM22 complex. Interacts with multi-pass transmembrane proteins in transit. Also forms a complex composed of TIMM9, TIMM10/TIM10A and FXC1/TIM10B.

The protein localises to the mitochondrion inner membrane. Its function is as follows. Mitochondrial intermembrane chaperone that participates in the import and insertion of multi-pass transmembrane proteins into the mitochondrial inner membrane. May also be required for the transfer of beta-barrel precursors from the TOM complex to the sorting and assembly machinery (SAM complex) of the outer membrane. Acts as a chaperone-like protein that protects the hydrophobic precursors from aggregation and guide them through the mitochondrial intermembrane space. This is Mitochondrial import inner membrane translocase subunit Tim10 (TIMM10) from Bos taurus (Bovine).